The chain runs to 264 residues: 3-methyl-2-oxobutanoate hydroxymethyltransferase (264 aa).

Mg(2+) contacts are provided by Asp-45 and Asp-84. 3-methyl-2-oxobutanoate is bound by residues 45-46 (DS), Asp-84, and Lys-112. Residue Glu-114 participates in Mg(2+) binding. The active-site Proton acceptor is Glu-181.

This sequence belongs to the PanB family. In terms of assembly, homodecamer; pentamer of dimers. The cofactor is Mg(2+).

The protein localises to the cytoplasm. The catalysed reaction is 3-methyl-2-oxobutanoate + (6R)-5,10-methylene-5,6,7,8-tetrahydrofolate + H2O = 2-dehydropantoate + (6S)-5,6,7,8-tetrahydrofolate. It participates in cofactor biosynthesis; (R)-pantothenate biosynthesis; (R)-pantoate from 3-methyl-2-oxobutanoate: step 1/2. Catalyzes the reversible reaction in which hydroxymethyl group from 5,10-methylenetetrahydrofolate is transferred onto alpha-ketoisovalerate to form ketopantoate. The protein is 3-methyl-2-oxobutanoate hydroxymethyltransferase of Tolumonas auensis (strain DSM 9187 / NBRC 110442 / TA 4).